The sequence spans 161 residues: MNQFGPSALINLSNFSSIKPEPASTPPQGSMANSTAVVKIPGTPGAGGRLSPENNQVLTKKKLQDLVREVDPNEQLDEDVEEMLLQIADDFIESVVTAACQLARHRKSSTLEVKDVQLHLERQWNMWIPGFGSEEIRPYKKACTTEAHKQRMALIRKTTKK.

The tract at residues 15-55 is disordered; it reads FSSIKPEPASTPPQGSMANSTAVVKIPGTPGAGGRLSPENN. Residue Lys19 forms a Glycyl lysine isopeptide (Lys-Gly) (interchain with G-Cter in SUMO2) linkage. The span at 26–36 shows a compositional bias: polar residues; sequence PPQGSMANSTA. The residue at position 43 (Thr43) is a Phosphothreonine. Ser51 carries the post-translational modification Phosphoserine. Thr59 is subject to Phosphothreonine. The Histone-fold domain maps to 59–126; that stretch reads TKKKLQDLVR…QLHLERQWNM (68 aa).

It belongs to the TAF12 family. Component of the TFIID basal transcription factor complex, composed of TATA-box-binding protein TBP, and a number of TBP-associated factors (TAFs), including TAF1, TAF2, TAF3, TAF4, TAF5, TAF6, TAF7, TAF8, TAF9, TAF10, TAF11, TAF12 and TAF13. Component of the TATA-binding protein-free TAF complex (TFTC), the PCAF histone acetylase complex and the STAGA transcription coactivator-HAT complex. Component of the PCAF complex, at least composed of TADA2L/ADA2, TADA3L/ADA3, TAF5L/PAF65-beta, SUPT3H, TAF6L, TAF9, TAF10, TAF12 and TRRAP. Component of the STAGA transcription coactivator-HAT complex, at least composed of SUPT3H, GCN5L2, TAF5L, TAF6L, STAF65-gamma/SUPT7L, TADA3L, TAD1L, TAF10, TAF12, TRRAP and TAF9. Interacts with ATF7 (via the transactivation domain); the interaction is prevented by sumoylation of ATF7. In terms of assembly, interacts with TBP; the interaction is direct. Interacts with TAF10; the interaction is direct. Interacts with ATF7, promoting transactivation by ATF7. As to quaternary structure, does not promote the transactivation of ATF7. In terms of tissue distribution, ubiquitous.

It localises to the nucleus. Functionally, the TFIID basal transcription factor complex plays a major role in the initiation of RNA polymerase II (Pol II)-dependent transcription. TFIID recognizes and binds promoters with or without a TATA box via its subunit TBP, a TATA-box-binding protein, and promotes assembly of the pre-initiation complex (PIC). The TFIID complex consists of TBP and TBP-associated factors (TAFs), including TAF1, TAF2, TAF3, TAF4, TAF5, TAF6, TAF7, TAF8, TAF9, TAF10, TAF11, TAF12 and TAF13. Component of the TATA-binding protein-free TAF complex (TFTC), the PCAF histone acetylase complex and the STAGA transcription coactivator-HAT complex. The protein is Transcription initiation factor TFIID subunit 12 of Homo sapiens (Human).